The sequence spans 251 residues: Imidazole glycerol phosphate synthase subunit HisF (251 aa).

Catalysis depends on residues Asp-11 and Asp-130.

The protein belongs to the HisA/HisF family. In terms of assembly, heterodimer of HisH and HisF.

The protein localises to the cytoplasm. The enzyme catalyses 5-[(5-phospho-1-deoxy-D-ribulos-1-ylimino)methylamino]-1-(5-phospho-beta-D-ribosyl)imidazole-4-carboxamide + L-glutamine = D-erythro-1-(imidazol-4-yl)glycerol 3-phosphate + 5-amino-1-(5-phospho-beta-D-ribosyl)imidazole-4-carboxamide + L-glutamate + H(+). Its pathway is amino-acid biosynthesis; L-histidine biosynthesis; L-histidine from 5-phospho-alpha-D-ribose 1-diphosphate: step 5/9. In terms of biological role, IGPS catalyzes the conversion of PRFAR and glutamine to IGP, AICAR and glutamate. The HisF subunit catalyzes the cyclization activity that produces IGP and AICAR from PRFAR using the ammonia provided by the HisH subunit. In Chlorobaculum tepidum (strain ATCC 49652 / DSM 12025 / NBRC 103806 / TLS) (Chlorobium tepidum), this protein is Imidazole glycerol phosphate synthase subunit HisF.